We begin with the raw amino-acid sequence, 396 residues long: Aspartate aminotransferase (396 aa).

Residues Gly-34, Trp-130, and Asn-183 each coordinate L-aspartate. An N6-(pyridoxal phosphate)lysine modification is found at Lys-246. Arg-374 is a binding site for L-aspartate.

It belongs to the class-I pyridoxal-phosphate-dependent aminotransferase family. In terms of assembly, homodimer. It depends on pyridoxal 5'-phosphate as a cofactor.

It is found in the cytoplasm. The enzyme catalyses L-aspartate + 2-oxoglutarate = oxaloacetate + L-glutamate. The protein is Aspartate aminotransferase (aspC) of Salmonella typhi.